We begin with the raw amino-acid sequence, 764 residues long: Semaphorin-3D (764 aa).

An N-terminal signal peptide occupies residues 1 to 41 (MKTAGEPDRRRQRRQVRTGRFSCAWWSTSVMLFFSLPEGNC). Positions 48-535 (RVKLGYKDLI…GSDGLVQVSL (488 aa)) constitute a Sema domain. C121 and C132 are joined by a disulfide. An N-linked (GlcNAc...) asparagine glycan is attached at N143. Intrachain disulfides connect C150/C159, C290/C402, and C314/C362. An N-linked (GlcNAc...) asparagine glycan is attached at N490. A disulfide bridge connects residues C538 and C556. A glycan (N-linked (GlcNAc...) asparagine) is linked at N610. One can recognise an Ig-like C2-type domain in the interval 661-740 (GDAGSYFCTS…EYCETMWHRE (80 aa)). A disulfide bond links C668 and C733. The segment at 743-764 (QKQKGKWKHVQELRKSRNRRHH) is disordered.

The protein belongs to the semaphorin family.

The protein localises to the secreted. Functionally, may play a role in the guidance of several axon pathways. In Danio rerio (Zebrafish), this protein is Semaphorin-3D (sema3d).